A 226-amino-acid polypeptide reads, in one-letter code: Fibronectin type III domain-containing protein 9 (226 aa).

In terms of domain architecture, Fibronectin type-III spans 1 to 101 (MNIEVGNVSH…FHTLDKSPLA (101 aa)). A helical transmembrane segment spans residues 113–133 (LWVLMAILLACFTAVLAFICL).

It is found in the membrane. In Mus musculus (Mouse), this protein is Fibronectin type III domain-containing protein 9 (Fndc9).